An 86-amino-acid polypeptide reads, in one-letter code: RQC P-site tRNA stabilizing factor (86 aa).

The S4 RNA-binding domain maps to 1-62; it reads MRLDKFLKVS…QKLVTVQVNE (62 aa).

It belongs to the RqcP family. In terms of assembly, associates with stalled 50S ribosomal subunits. Binds to RqcH, 23S rRNA and the P-site tRNA. Does not require RqcH for association with 50S subunits. Crystallized 50S subunits are variously associated with an A/P-site tRNA with or without RqcH, as well as with P- and E-site tRNAs but no RqcH. Displaced from the 50S subunit by puromycin but not thiostrepton.

In terms of biological role, key component of the ribosome quality control system (RQC), a ribosome-associated complex that mediates the extraction of incompletely synthesized nascent chains from stalled ribosomes and their subsequent degradation. RqcH recruits Ala-charged tRNA, and with RqcP directs the elongation of stalled nascent chains on 50S ribosomal subunits, leading to non-templated C-terminal alanine extensions (Ala tail). The Ala tail promotes nascent chain degradation. RqcP is associated with the translocation-like movement of the peptidyl-tRNA from the A-site into the P-site. RqcH, RqcP and charged tRNA(Ala) are necessary and sufficient to add an Ala tail to a model stalled nascent peptide; does not add Val. The protein is RQC P-site tRNA stabilizing factor of Bacillus subtilis (strain 168).